Here is a 62-residue protein sequence, read N- to C-terminus: Beta-defensin 33 (62 aa).

The N-terminal stretch at 1 to 20 (MRLLFLLFILLVCLAQTTSG) is a signal peptide. Intrachain disulfides connect Cys30/Cys59, Cys37/Cys52, and Cys45/Cys60.

It belongs to the beta-defensin family.

Its subcellular location is the secreted. Has antibacterial activity. This Mus musculus (Mouse) protein is Beta-defensin 33 (Defb33).